The primary structure comprises 121 residues: Small ribosomal subunit protein uS13 (121 aa).

The interval 91–121 (HRKGLPLRGQRTRTNARTRKGPRKAGVALKK) is disordered.

This sequence belongs to the universal ribosomal protein uS13 family. As to quaternary structure, part of the 30S ribosomal subunit. Forms a loose heterodimer with protein S19. Forms two bridges to the 50S subunit in the 70S ribosome.

In terms of biological role, located at the top of the head of the 30S subunit, it contacts several helices of the 16S rRNA. In the 70S ribosome it contacts the 23S rRNA (bridge B1a) and protein L5 of the 50S subunit (bridge B1b), connecting the 2 subunits; these bridges are implicated in subunit movement. Contacts the tRNAs in the A and P-sites. This Cupriavidus pinatubonensis (strain JMP 134 / LMG 1197) (Cupriavidus necator (strain JMP 134)) protein is Small ribosomal subunit protein uS13.